A 140-amino-acid polypeptide reads, in one-letter code: Protein SNA4 (140 aa).

At 1–8 (MCCYCVCC) the chain is on the cytoplasmic side. 5 S-palmitoyl cysteine lipidation sites follow: C2, C3, C5, C7, and C8. A helical transmembrane segment spans residues 9-29 (TVSDFILYIVAFFFPPAAVLL). The Vacuolar portion of the chain corresponds to 30 to 41 (RSGPCSSDFLLN). The helical transmembrane segment at 42–62 (VLLTLLGFLPGMLHAFYYITI) threads the bilayer. Residues 63-140 (TSPLRNAEYV…LVESPPPYVP (78 aa)) lie on the Cytoplasmic side of the membrane. Residues 84–140 (RNVPSNRPQNSQTPQNRPQQGSSARNVYPSVETPLLQGAAPHDNKQSLVESPPPYVP) are disordered. Over residues 85–108 (NVPSNRPQNSQTPQNRPQQGSSAR) the composition is skewed to polar residues. A Glycyl lysine isopeptide (Lys-Gly) (interchain with G-Cter in ubiquitin) cross-link involves residue K128. Position 134 is a phosphoserine (S134).

This sequence belongs to the UPF0057 (PMP3) family.

The protein localises to the vacuole membrane. The polypeptide is Protein SNA4 (SNA4) (Saccharomyces cerevisiae (strain ATCC 204508 / S288c) (Baker's yeast)).